Consider the following 220-residue polypeptide: Octanoyltransferase (220 aa).

The 189-residue stretch at Gly29–Pro217 folds into the BPL/LPL catalytic domain. Residues Arg68–His75, Ala148–Gly150, and Gly161–Ser163 each bind substrate. Cys179 functions as the Acyl-thioester intermediate in the catalytic mechanism.

This sequence belongs to the LipB family.

The protein localises to the cytoplasm. It carries out the reaction octanoyl-[ACP] + L-lysyl-[protein] = N(6)-octanoyl-L-lysyl-[protein] + holo-[ACP] + H(+). It participates in protein modification; protein lipoylation via endogenous pathway; protein N(6)-(lipoyl)lysine from octanoyl-[acyl-carrier-protein]: step 1/2. In terms of biological role, catalyzes the transfer of endogenously produced octanoic acid from octanoyl-acyl-carrier-protein onto the lipoyl domains of lipoate-dependent enzymes. Lipoyl-ACP can also act as a substrate although octanoyl-ACP is likely to be the physiological substrate. In Dinoroseobacter shibae (strain DSM 16493 / NCIMB 14021 / DFL 12), this protein is Octanoyltransferase.